Consider the following 118-residue polypeptide: Putative membrane protein insertion efficiency factor (118 aa).

A disordered region spans residues 76–118; the sequence is WDPVPQRRPRRRDAAAADAAMSAPHACKGSPHAVVGDTNDGST. A compositionally biased stretch (low complexity) spans 91-101; sequence AADAAMSAPHA.

This sequence belongs to the UPF0161 family.

The protein localises to the cell membrane. Its function is as follows. Could be involved in insertion of integral membrane proteins into the membrane. This chain is Putative membrane protein insertion efficiency factor, found in Nocardia farcinica (strain IFM 10152).